A 303-amino-acid chain; its full sequence is Probable 5-dehydro-4-deoxyglucarate dehydratase (303 aa).

The protein belongs to the DapA family.

The catalysed reaction is 5-dehydro-4-deoxy-D-glucarate + H(+) = 2,5-dioxopentanoate + CO2 + H2O. Its pathway is carbohydrate acid metabolism; D-glucarate degradation; 2,5-dioxopentanoate from D-glucarate: step 2/2. This chain is Probable 5-dehydro-4-deoxyglucarate dehydratase, found in Leptothrix cholodnii (strain ATCC 51168 / LMG 8142 / SP-6) (Leptothrix discophora (strain SP-6)).